Consider the following 183-residue polypeptide: Ribulose bisphosphate carboxylase small subunit, chloroplastic (183 aa).

Residues 1–59 (MASSMISSGTVATVSADRPAPAQARMVAPFTGLKSSSASPVTRKSNDITSIASNGGRVQ) constitute a chloroplast transit peptide.

This sequence belongs to the RuBisCO small chain family. As to quaternary structure, heterohexadecamer of 8 large and 8 small subunits.

It is found in the plastid. It localises to the chloroplast. In terms of biological role, ruBisCO catalyzes two reactions: the carboxylation of D-ribulose 1,5-bisphosphate, the primary event in carbon dioxide fixation, as well as the oxidative fragmentation of the pentose substrate. Both reactions occur simultaneously and in competition at the same active site. Although the small subunit is not catalytic it is essential for maximal activity. This Malus sp. (Crab apple) protein is Ribulose bisphosphate carboxylase small subunit, chloroplastic.